We begin with the raw amino-acid sequence, 495 residues long: uncharacterized protein (495 aa).

The segment at Pro389 to Asn457 adopts a CHY-type zinc-finger fold. Residues Cys396, His398, Cys410, Cys411, Cys417, Cys420, His421, His427, Cys437, Cys440, Cys452, and Cys455 each coordinate Zn(2+). A compositionally biased stretch (basic and acidic residues) spans Gly473–Lys483. The tract at residues Gly473 to Asn495 is disordered. The span at Asp484–Asn495 shows a compositional bias: basic residues.

It localises to the cytoplasm. This is an uncharacterized protein from Schizosaccharomyces pombe (strain 972 / ATCC 24843) (Fission yeast).